A 100-amino-acid chain; its full sequence is MHLTSREQEKLMLFLAGELAAKRKARGVKLNYPETIAYIASHLQEAARDGMSVAEVMQYGATLLTVDDVMEGVAEMVHEVQIEATFPDGTKLVTVHNPIR.

It belongs to the urease gamma subunit family. As to quaternary structure, heterotrimer of UreA (gamma), UreB (beta) and UreC (alpha) subunits. Three heterotrimers associate to form the active enzyme.

Its subcellular location is the cytoplasm. It catalyses the reaction urea + 2 H2O + H(+) = hydrogencarbonate + 2 NH4(+). It participates in nitrogen metabolism; urea degradation; CO(2) and NH(3) from urea (urease route): step 1/1. In Haemophilus influenzae (strain 86-028NP), this protein is Urease subunit gamma.